We begin with the raw amino-acid sequence, 82 residues long: Delta-actitoxin-Aeq2b 1 (82 aa).

An N-terminal signal peptide occupies residues 1-19; it reads MNRLMILVFAAVILALASA. A propeptide spanning residues 20 to 26 is cleaved from the precursor; it reads DEDVDIA. 3 cysteine pairs are disulfide-bonded: cysteine 32–cysteine 79, cysteine 34–cysteine 69, and cysteine 62–cysteine 80.

Belongs to the sea anemone sodium channel inhibitory toxin family. Type I subfamily.

Its subcellular location is the secreted. The protein localises to the nematocyst. Binds specifically to voltage-gated sodium channels (Nav), thereby delaying their inactivation during signal transduction. Causes death to crabs. The sequence is that of Delta-actitoxin-Aeq2b 1 from Actinia equina (Beadlet anemone).